A 118-amino-acid polypeptide reads, in one-letter code: Large ribosomal subunit protein bL19 (118 aa).

The protein belongs to the bacterial ribosomal protein bL19 family.

In terms of biological role, this protein is located at the 30S-50S ribosomal subunit interface and may play a role in the structure and function of the aminoacyl-tRNA binding site. In Wolinella succinogenes (strain ATCC 29543 / DSM 1740 / CCUG 13145 / JCM 31913 / LMG 7466 / NCTC 11488 / FDC 602W) (Vibrio succinogenes), this protein is Large ribosomal subunit protein bL19.